The primary structure comprises 177 residues: Large ribosomal subunit protein uL6 (177 aa).

The protein belongs to the universal ribosomal protein uL6 family. In terms of assembly, part of the 50S ribosomal subunit.

This protein binds to the 23S rRNA, and is important in its secondary structure. It is located near the subunit interface in the base of the L7/L12 stalk, and near the tRNA binding site of the peptidyltransferase center. The protein is Large ribosomal subunit protein uL6 of Methylocella silvestris (strain DSM 15510 / CIP 108128 / LMG 27833 / NCIMB 13906 / BL2).